A 524-amino-acid polypeptide reads, in one-letter code: Phosphoenolpyruvate carboxykinase (ATP) (524 aa).

3 residues coordinate substrate: Arg-52, Tyr-188, and Lys-194. Residues Lys-194, His-213, and 229–237 (GLSGTGKTT) each bind ATP. 2 residues coordinate Mn(2+): Lys-194 and His-213. Mn(2+) is bound at residue Asp-250. The ATP site is built by Glu-278, Arg-314, and Thr-439. Arg-314 contributes to the substrate binding site.

This sequence belongs to the phosphoenolpyruvate carboxykinase (ATP) family. The cofactor is Mn(2+).

Its subcellular location is the cytoplasm. It catalyses the reaction oxaloacetate + ATP = phosphoenolpyruvate + ADP + CO2. It participates in carbohydrate biosynthesis; gluconeogenesis. In terms of biological role, involved in the gluconeogenesis. Catalyzes the conversion of oxaloacetate (OAA) to phosphoenolpyruvate (PEP) through direct phosphoryl transfer between the nucleoside triphosphate and OAA. The chain is Phosphoenolpyruvate carboxykinase (ATP) from Campylobacter jejuni subsp. jejuni serotype O:23/36 (strain 81-176).